The sequence spans 287 residues: ATP synthase gamma chain (287 aa).

This sequence belongs to the ATPase gamma chain family. In terms of assembly, F-type ATPases have 2 components, CF(1) - the catalytic core - and CF(0) - the membrane proton channel. CF(1) has five subunits: alpha(3), beta(3), gamma(1), delta(1), epsilon(1). CF(0) has three main subunits: a, b and c.

The protein resides in the cell membrane. Its function is as follows. Produces ATP from ADP in the presence of a proton gradient across the membrane. The gamma chain is believed to be important in regulating ATPase activity and the flow of protons through the CF(0) complex. The protein is ATP synthase gamma chain of Wolbachia sp. subsp. Drosophila simulans (strain wRi).